The following is a 572-amino-acid chain: Methionine--tRNA ligase (572 aa).

The 'HIGH' region motif lies at 11–21 (PYINGVKHLGN). Residues cysteine 143, cysteine 146, cysteine 156, and cysteine 159 each contribute to the Zn(2+) site. The short motif at 341-345 (KFSTS) is the 'KMSKS' region element. Residue threonine 344 participates in ATP binding.

Belongs to the class-I aminoacyl-tRNA synthetase family. MetG type 1 subfamily. As to quaternary structure, monomer. Zn(2+) is required as a cofactor.

The protein localises to the cytoplasm. The enzyme catalyses tRNA(Met) + L-methionine + ATP = L-methionyl-tRNA(Met) + AMP + diphosphate. Functionally, is required not only for elongation of protein synthesis but also for the initiation of all mRNA translation through initiator tRNA(fMet) aminoacylation. The sequence is that of Methionine--tRNA ligase from Maricaulis maris (strain MCS10) (Caulobacter maris).